The chain runs to 949 residues: Bifunctional uridylyltransferase/uridylyl-removing enzyme (949 aa).

A uridylyltransferase region spans residues 1-377 (MARHETSFPE…RFRNRVRKIA (377 aa)). Residues 378-733 (GTLDFVDDGG…VRTHDFHAIT (356 aa)) form a uridylyl-removing region. In terms of domain architecture, HD spans 494-610 (VDEHLLRSVD…VDFAERVQSL (117 aa)). ACT domains lie at 734–816 (EITV…VIAS) and 845–926 (VIEV…ERMP). A disordered region spans residues 926 to 949 (PSGIIAPTPVSRVPHGSKTTKAET).

This sequence belongs to the GlnD family. It depends on Mg(2+) as a cofactor.

It catalyses the reaction [protein-PII]-L-tyrosine + UTP = [protein-PII]-uridylyl-L-tyrosine + diphosphate. The enzyme catalyses [protein-PII]-uridylyl-L-tyrosine + H2O = [protein-PII]-L-tyrosine + UMP + H(+). With respect to regulation, uridylyltransferase (UTase) activity is inhibited by glutamine, while glutamine activates uridylyl-removing (UR) activity. In terms of biological role, modifies, by uridylylation and deuridylylation, the PII regulatory proteins (GlnB and homologs), in response to the nitrogen status of the cell that GlnD senses through the glutamine level. Under low glutamine levels, catalyzes the conversion of the PII proteins and UTP to PII-UMP and PPi, while under higher glutamine levels, GlnD hydrolyzes PII-UMP to PII and UMP (deuridylylation). Thus, controls uridylylation state and activity of the PII proteins, and plays an important role in the regulation of nitrogen fixation and metabolism. The protein is Bifunctional uridylyltransferase/uridylyl-removing enzyme of Rhizobium meliloti (strain 1021) (Ensifer meliloti).